The following is a 340-amino-acid chain: Ketol-acid reductoisomerase (NADP(+)) (340 aa).

The KARI N-terminal Rossmann domain maps to Val3–Thr182. NADP(+)-binding positions include Tyr26–Gln29, Arg49, Ser53, and Asp83–Gln86. Residue His108 is part of the active site. Gly134 serves as a coordination point for NADP(+). The 146-residue stretch at Thr183–Thr328 folds into the KARI C-terminal knotted domain. Asp191, Glu195, Glu227, and Glu231 together coordinate Mg(2+). Ser252 contributes to the substrate binding site.

Belongs to the ketol-acid reductoisomerase family. Mg(2+) is required as a cofactor.

It carries out the reaction (2R)-2,3-dihydroxy-3-methylbutanoate + NADP(+) = (2S)-2-acetolactate + NADPH + H(+). It catalyses the reaction (2R,3R)-2,3-dihydroxy-3-methylpentanoate + NADP(+) = (S)-2-ethyl-2-hydroxy-3-oxobutanoate + NADPH + H(+). It participates in amino-acid biosynthesis; L-isoleucine biosynthesis; L-isoleucine from 2-oxobutanoate: step 2/4. It functions in the pathway amino-acid biosynthesis; L-valine biosynthesis; L-valine from pyruvate: step 2/4. Involved in the biosynthesis of branched-chain amino acids (BCAA). Catalyzes an alkyl-migration followed by a ketol-acid reduction of (S)-2-acetolactate (S2AL) to yield (R)-2,3-dihydroxy-isovalerate. In the isomerase reaction, S2AL is rearranged via a Mg-dependent methyl migration to produce 3-hydroxy-3-methyl-2-ketobutyrate (HMKB). In the reductase reaction, this 2-ketoacid undergoes a metal-dependent reduction by NADPH to yield (R)-2,3-dihydroxy-isovalerate. The polypeptide is Ketol-acid reductoisomerase (NADP(+)) (Lactococcus lactis subsp. cremoris (strain MG1363)).